Reading from the N-terminus, the 195-residue chain is Probable GTP-binding protein EngB (195 aa).

Positions 22–195 (GLPEIALAGR…WGAIKKMINR (174 aa)) constitute an EngB-type G domain. Residues 30–37 (GRSNVGKS), 57–61 (GKTQT), 75–78 (DVPG), 142–145 (TKAD), and 174–176 (FSS) contribute to the GTP site. Residues S37 and T59 each contribute to the Mg(2+) site.

It belongs to the TRAFAC class TrmE-Era-EngA-EngB-Septin-like GTPase superfamily. EngB GTPase family. Mg(2+) serves as cofactor.

In terms of biological role, necessary for normal cell division and for the maintenance of normal septation. Its function is as follows. Binds GTP and GDP. This is Probable GTP-binding protein EngB from Bacillus subtilis (strain 168).